Reading from the N-terminus, the 281-residue chain is Probable replication-associated protein repA1 (281 aa).

It belongs to the IncFII RepA family.

This protein is essential for plasmid replication; it is involved in copy control functions. In Buchnera aphidicola subsp. Cinara cedri (strain Cc), this protein is Probable replication-associated protein repA1 (repA1).